We begin with the raw amino-acid sequence, 391 residues long: Transaldolase (391 aa).

K134 acts as the Schiff-base intermediate with substrate in catalysis. 2 consecutive EF-hand domains span residues 329 to 364 (TLTH…FDAL) and 365 to 387 (DANH…VLHL). Positions 342, 344, 346, 353, 365, 367, 369, 371, and 376 each coordinate Ca(2+).

The protein belongs to the transaldolase family. Type 1 subfamily.

The protein localises to the cytoplasm. The enzyme catalyses D-sedoheptulose 7-phosphate + D-glyceraldehyde 3-phosphate = D-erythrose 4-phosphate + beta-D-fructose 6-phosphate. The protein operates within carbohydrate degradation; pentose phosphate pathway; D-glyceraldehyde 3-phosphate and beta-D-fructose 6-phosphate from D-ribose 5-phosphate and D-xylulose 5-phosphate (non-oxidative stage): step 2/3. Its function is as follows. Transaldolase is important for the balance of metabolites in the pentose-phosphate pathway. The protein is Transaldolase of Thermosynechococcus vestitus (strain NIES-2133 / IAM M-273 / BP-1).